A 54-amino-acid chain; its full sequence is Large ribosomal subunit protein bL32c (54 aa).

A compositionally biased stretch (basic residues) spans 1–20 (MAVPKKRVSKSKRDMRKTTW). Positions 1 to 54 (MAVPKKRVSKSKRDMRKTTWKNKASKEAKKALSLAKSVSTGKSKSKGFQIKSSN) are disordered. A compositionally biased stretch (low complexity) spans 31 to 42 (ALSLAKSVSTGK).

The protein belongs to the bacterial ribosomal protein bL32 family.

It is found in the plastid. The protein localises to the chloroplast. The protein is Large ribosomal subunit protein bL32c of Chlorokybus atmophyticus (Soil alga).